Reading from the N-terminus, the 440-residue chain is Light-independent protochlorophyllide reductase subunit B (440 aa).

Aspartate 36 provides a ligand contact to [4Fe-4S] cluster. Position 427–428 (427–428) interacts with substrate; that stretch reads KD.

It belongs to the ChlB/BchB/BchZ family. In terms of assembly, protochlorophyllide reductase is composed of three subunits; ChlL, ChlN and ChlB. Forms a heterotetramer of two ChlB and two ChlN subunits. [4Fe-4S] cluster serves as cofactor.

The protein resides in the plastid. It is found in the cyanelle. It carries out the reaction chlorophyllide a + oxidized 2[4Fe-4S]-[ferredoxin] + 2 ADP + 2 phosphate = protochlorophyllide a + reduced 2[4Fe-4S]-[ferredoxin] + 2 ATP + 2 H2O. It participates in porphyrin-containing compound metabolism; chlorophyll biosynthesis (light-independent). Its function is as follows. Component of the dark-operative protochlorophyllide reductase (DPOR) that uses Mg-ATP and reduced ferredoxin to reduce ring D of protochlorophyllide (Pchlide) to form chlorophyllide a (Chlide). This reaction is light-independent. The NB-protein (ChlN-ChlB) is the catalytic component of the complex. The protein is Light-independent protochlorophyllide reductase subunit B of Cyanophora paradoxa.